A 194-amino-acid polypeptide reads, in one-letter code: Protein GrpE (194 aa).

Belongs to the GrpE family. In terms of assembly, homodimer.

It is found in the cytoplasm. Functionally, participates actively in the response to hyperosmotic and heat shock by preventing the aggregation of stress-denatured proteins, in association with DnaK and GrpE. It is the nucleotide exchange factor for DnaK and may function as a thermosensor. Unfolded proteins bind initially to DnaJ; upon interaction with the DnaJ-bound protein, DnaK hydrolyzes its bound ATP, resulting in the formation of a stable complex. GrpE releases ADP from DnaK; ATP binding to DnaK triggers the release of the substrate protein, thus completing the reaction cycle. Several rounds of ATP-dependent interactions between DnaJ, DnaK and GrpE are required for fully efficient folding. This is Protein GrpE from Aliivibrio salmonicida (strain LFI1238) (Vibrio salmonicida (strain LFI1238)).